The primary structure comprises 359 residues: uncharacterized protein (359 aa).

The protein belongs to the glycosyltransferase group 1 family. Glycosyltransferase 4 subfamily.

This is an uncharacterized protein from Bacillus subtilis (strain 168).